Consider the following 293-residue polypeptide: Acetylglutamate kinase (293 aa).

Residues 60–61, Arg82, and Asn188 contribute to the substrate site; that span reads GG.

It belongs to the acetylglutamate kinase family. ArgB subfamily.

The protein resides in the cytoplasm. The enzyme catalyses N-acetyl-L-glutamate + ATP = N-acetyl-L-glutamyl 5-phosphate + ADP. The protein operates within amino-acid biosynthesis; L-arginine biosynthesis; N(2)-acetyl-L-ornithine from L-glutamate: step 2/4. Functionally, catalyzes the ATP-dependent phosphorylation of N-acetyl-L-glutamate. This Methanothermobacter thermautotrophicus (strain ATCC 29096 / DSM 1053 / JCM 10044 / NBRC 100330 / Delta H) (Methanobacterium thermoautotrophicum) protein is Acetylglutamate kinase.